We begin with the raw amino-acid sequence, 235 residues long: Carboxy-S-adenosyl-L-methionine synthase (235 aa).

S-adenosyl-L-methionine is bound by residues Tyr35, 60–62, 84–85, 110–111, Asn125, and Arg192; these read GCS, DN, and DI.

It belongs to the class I-like SAM-binding methyltransferase superfamily. Cx-SAM synthase family. As to quaternary structure, homodimer.

It catalyses the reaction prephenate + S-adenosyl-L-methionine = carboxy-S-adenosyl-L-methionine + 3-phenylpyruvate + H2O. Functionally, catalyzes the conversion of S-adenosyl-L-methionine (SAM) to carboxy-S-adenosyl-L-methionine (Cx-SAM). The chain is Carboxy-S-adenosyl-L-methionine synthase from Sulfurimonas denitrificans (strain ATCC 33889 / DSM 1251) (Thiomicrospira denitrificans (strain ATCC 33889 / DSM 1251)).